The chain runs to 197 residues: Small ribosomal subunit protein uS4B (197 aa).

Residues 88-150 (SRLDNMVYRM…SRKTEMFVNN (63 aa)) form the S4 RNA-binding domain.

Belongs to the universal ribosomal protein uS4 family. As to quaternary structure, part of the 30S ribosomal subunit. Contacts protein S5. The interaction surface between S4 and S5 is involved in control of translational fidelity.

Functionally, one of the primary rRNA binding proteins, it binds directly to 16S rRNA where it nucleates assembly of the body of the 30S subunit. Its function is as follows. With S5 and S12 plays an important role in translational accuracy. This Clostridium perfringens (strain ATCC 13124 / DSM 756 / JCM 1290 / NCIMB 6125 / NCTC 8237 / Type A) protein is Small ribosomal subunit protein uS4B.